Here is a 241-residue protein sequence, read N- to C-terminus: Glucosamine-6-phosphate deaminase (241 aa).

The Proton acceptor; for enolization step role is filled by Asp-67. The active-site For ring-opening step is Asn-136. Catalysis depends on His-138, which acts as the Proton acceptor; for ring-opening step. Glu-143 (for ring-opening step) is an active-site residue.

Belongs to the glucosamine/galactosamine-6-phosphate isomerase family. NagB subfamily.

The enzyme catalyses alpha-D-glucosamine 6-phosphate + H2O = beta-D-fructose 6-phosphate + NH4(+). The protein operates within amino-sugar metabolism; N-acetylneuraminate degradation; D-fructose 6-phosphate from N-acetylneuraminate: step 5/5. In terms of biological role, catalyzes the reversible isomerization-deamination of glucosamine 6-phosphate (GlcN6P) to form fructose 6-phosphate (Fru6P) and ammonium ion. The sequence is that of Glucosamine-6-phosphate deaminase from Clostridium tetani (strain Massachusetts / E88).